Here is a 75-residue protein sequence, read N- to C-terminus: Small ribosomal subunit protein bS18 (75 aa).

Belongs to the bacterial ribosomal protein bS18 family. Part of the 30S ribosomal subunit. Forms a tight heterodimer with protein bS6.

Binds as a heterodimer with protein bS6 to the central domain of the 16S rRNA, where it helps stabilize the platform of the 30S subunit. The protein is Small ribosomal subunit protein bS18 of Pseudoalteromonas translucida (strain TAC 125).